The primary structure comprises 240 residues: Small ribosomal subunit protein uS3 (240 aa).

The KH type-2 domain maps to 39–107; it reads IREFIKEECK…ELHLNIVEVR (69 aa). Positions 212–222 are enriched in basic and acidic residues; it reads PQARDRRHAEL. Residues 212 to 240 are disordered; that stretch reads PQARDRRHAELQEGGGPRPQGGGRPRRDR. Positions 224-234 are enriched in gly residues; that stretch reads EGGGPRPQGGG.

It belongs to the universal ribosomal protein uS3 family. As to quaternary structure, part of the 30S ribosomal subunit. Forms a tight complex with proteins S10 and S14.

Its function is as follows. Binds the lower part of the 30S subunit head. Binds mRNA in the 70S ribosome, positioning it for translation. The chain is Small ribosomal subunit protein uS3 from Dinoroseobacter shibae (strain DSM 16493 / NCIMB 14021 / DFL 12).